The sequence spans 100 residues: Large ribosomal subunit protein bL27 (100 aa).

The propeptide occupies 1–13; sequence MNKLYWLTDLQLF. Residues 17–39 are disordered; the sequence is KGVGSSKNGRDSNPKYLGAKLGD.

It belongs to the bacterial ribosomal protein bL27 family. In terms of processing, the N-terminus is cleaved by ribosomal processing cysteine protease Prp.

The sequence is that of Large ribosomal subunit protein bL27 from Ureaplasma parvum serovar 3 (strain ATCC 700970).